Reading from the N-terminus, the 364-residue chain is Geissoschizine synthase (364 aa).

Residues 24 to 343 (GILHPIKFSR…DYLSTAMERI (320 aa)) enclose the Enoyl reductase (ER) domain. Residue C51 coordinates Zn(2+). N52 contacts NADP(+). Residues H73, E74, C104, C107, C110, C118, and C168 each coordinate Zn(2+). NADP(+) is bound by residues L194, G196, L197, S216, T217, S218, K221, R261, V280, A282, S304, T306, and R351.

The protein belongs to the zinc-containing alcohol dehydrogenase family. Class-III subfamily. As to quaternary structure, homodimer. Zn(2+) is required as a cofactor.

The catalysed reaction is (19E)-geissoschizine + NADP(+) = 4,21-dehydrogeissoschizine + NADPH. It catalyses the reaction (19E)-geissoschizine + NADPH + H(+) = (16R,19E)-isositsirikine + NADP(+). It carries out the reaction (19E)-geissoschizine + NADPH + H(+) = (16R,19Z)-isositsirikine + NADP(+). The protein operates within alkaloid biosynthesis. In terms of biological role, an alcohol dehydrogenase involved in the biosynthesis of seco-iridoid and derivatives monoterpenoid indole alkaloids natural products. Catalyzes the production of geissoschizine and its conversion to (16R)-E-isositsirikine and (16R)-Z-isositsirikine. In Alstonia scholaris (Dogbane), this protein is Geissoschizine synthase.